The primary structure comprises 236 residues: LexA repressor (236 aa).

Residues phenylalanine 26–threonine 46 constitute a DNA-binding region (H-T-H motif). The interval proline 85–arginine 109 is disordered. Catalysis depends on for autocatalytic cleavage activity residues serine 157 and lysine 195.

It belongs to the peptidase S24 family. In terms of assembly, homodimer.

The enzyme catalyses Hydrolysis of Ala-|-Gly bond in repressor LexA.. Represses a number of genes involved in the response to DNA damage (SOS response), including recA and lexA. In the presence of single-stranded DNA, RecA interacts with LexA causing an autocatalytic cleavage which disrupts the DNA-binding part of LexA, leading to derepression of the SOS regulon and eventually DNA repair. The chain is LexA repressor from Rhodopseudomonas palustris (strain ATCC BAA-98 / CGA009).